Reading from the N-terminus, the 370-residue chain is Histidinol-phosphate aminotransferase (370 aa).

Lysine 229 is modified (N6-(pyridoxal phosphate)lysine).

The protein belongs to the class-II pyridoxal-phosphate-dependent aminotransferase family. Histidinol-phosphate aminotransferase subfamily. As to quaternary structure, homodimer. Pyridoxal 5'-phosphate serves as cofactor.

The catalysed reaction is L-histidinol phosphate + 2-oxoglutarate = 3-(imidazol-4-yl)-2-oxopropyl phosphate + L-glutamate. Its pathway is amino-acid biosynthesis; L-histidine biosynthesis; L-histidine from 5-phospho-alpha-D-ribose 1-diphosphate: step 7/9. The polypeptide is Histidinol-phosphate aminotransferase (Helicobacter hepaticus (strain ATCC 51449 / 3B1)).